The sequence spans 449 residues: Phosphoglucosamine mutase (449 aa).

Residue Ser102 is the Phosphoserine intermediate of the active site. Residues Ser102, Asp241, Asp243, and Asp245 each coordinate Mg(2+). Residue Ser102 is modified to Phosphoserine.

The protein belongs to the phosphohexose mutase family. Requires Mg(2+) as cofactor. Post-translationally, activated by phosphorylation.

It catalyses the reaction alpha-D-glucosamine 1-phosphate = D-glucosamine 6-phosphate. In terms of biological role, catalyzes the conversion of glucosamine-6-phosphate to glucosamine-1-phosphate. The protein is Phosphoglucosamine mutase of Pseudoalteromonas translucida (strain TAC 125).